A 184-amino-acid polypeptide reads, in one-letter code: Acireductone dioxygenase (184 aa).

4 residues coordinate Fe(2+): His87, His89, Glu93, and His137. Ni(2+) contacts are provided by His87, His89, Glu93, and His137.

It belongs to the acireductone dioxygenase (ARD) family. Requires Fe(2+) as cofactor. It depends on Ni(2+) as a cofactor.

Its subcellular location is the cytoplasm. The protein localises to the nucleus. It catalyses the reaction 1,2-dihydroxy-5-(methylsulfanyl)pent-1-en-3-one + O2 = 4-methylsulfanyl-2-oxobutanoate + formate + 2 H(+). It carries out the reaction 1,2-dihydroxy-5-(methylsulfanyl)pent-1-en-3-one + O2 = 3-(methylsulfanyl)propanoate + CO + formate + 2 H(+). It participates in amino-acid biosynthesis; L-methionine biosynthesis via salvage pathway; L-methionine from S-methyl-5-thio-alpha-D-ribose 1-phosphate: step 5/6. In terms of biological role, catalyzes 2 different reactions between oxygen and the acireductone 1,2-dihydroxy-3-keto-5-methylthiopentene (DHK-MTPene) depending upon the metal bound in the active site. Fe-containing acireductone dioxygenase (Fe-ARD) produces formate and 2-keto-4-methylthiobutyrate (KMTB), the alpha-ketoacid precursor of methionine in the methionine recycle pathway. Ni-containing acireductone dioxygenase (Ni-ARD) produces methylthiopropionate, carbon monoxide and formate, and does not lie on the methionine recycle pathway. The chain is Acireductone dioxygenase from Ciona intestinalis (Transparent sea squirt).